Reading from the N-terminus, the 98-residue chain is NADH-ubiquinone oxidoreductase chain 4L (98 aa).

A run of 3 helical transmembrane segments spans residues 1–21 (MPFI…GLLM), 29–49 (SLLC…LLCL), and 61–81 (MILL…LVMV).

It belongs to the complex I subunit 4L family. As to quaternary structure, core subunit of respiratory chain NADH dehydrogenase (Complex I) which is composed of 45 different subunits.

Its subcellular location is the mitochondrion inner membrane. The enzyme catalyses a ubiquinone + NADH + 5 H(+)(in) = a ubiquinol + NAD(+) + 4 H(+)(out). Functionally, core subunit of the mitochondrial membrane respiratory chain NADH dehydrogenase (Complex I) which catalyzes electron transfer from NADH through the respiratory chain, using ubiquinone as an electron acceptor. Part of the enzyme membrane arm which is embedded in the lipid bilayer and involved in proton translocation. The chain is NADH-ubiquinone oxidoreductase chain 4L (MT-ND4L) from Dugong dugon (Dugong).